The chain runs to 899 residues: CNK3/IPCEF1 fusion protein (899 aa).

The SAM domain maps to 7-72; the sequence is WSPKQVVDWT…LEAVDLLCAL (66 aa). In terms of domain architecture, CRIC spans 80–174; that stretch reads NMKNLVLKLR…TTVQKDCFVA (95 aa). The region spanning 211-293 is the PDZ domain; the sequence is EVHLPNIKPG…GVVLLLKKRP (83 aa). 2 disordered regions span residues 309 to 334 and 347 to 390; these read WKPPLVQTSPPPATTQSPESTMDTSL and PPPP…FLDQ. One can recognise a DUF1170 domain in the interval 332–457; that stretch reads TSLKKEKSAI…ARPRGHGRKA (126 aa). The residue at position 383 (Ser-383) is a Phosphoserine. The 100-residue stretch at 503 to 602 folds into the PH domain; that stretch reads HADCQGWLYK…WLNKLGSAVI (100 aa). Disordered regions lie at residues 605–687, 735–770, and 868–899; these read ESTT…PDTV, LSSDDTSSLSSNHDHLTVPDKPAGSKIMDKEETKVS, and QQQRASPAPDDTDDTPQELKKSPSSPSVENSI. Residues 613-624 are compositionally biased toward acidic residues; that stretch reads CYSESEQEDPEI. The segment covering 634–662 has biased composition (low complexity); it reads ASQTQSLTAQQASSSSPSLSGTSYSFSSL. Residues 663–676 show a composition bias toward polar residues; that stretch reads ENTVKTPSSFPSSL. The span at 735–745 shows a compositional bias: low complexity; that stretch reads LSSDDTSSLSS. Positions 761 to 770 are enriched in basic and acidic residues; it reads IMDKEETKVS. The required for interaction with CYTH2 stretch occupies residues 851–899; the sequence is KYREWKVMNTLLIQDIYQQQRASPAPDDTDDTPQELKKSPSSPSVENSI. Ser-873 is subject to Phosphoserine. The segment covering 889-899 has biased composition (polar residues); the sequence is SPSSPSVENSI.

The protein belongs to the CNKSR family.

In terms of biological role, required for hepatocyte growth factor (HGF)-dependent activation of Arf6 and HGF-stimulated cell migration. The polypeptide is CNK3/IPCEF1 fusion protein (CNK3/IPCEF1) (Homo sapiens (Human)).